Consider the following 149-residue polypeptide: D-aminoacyl-tRNA deacylase (149 aa).

The Gly-cisPro motif, important for rejection of L-amino acids motif lies at 137–138 (GP).

This sequence belongs to the DTD family. As to quaternary structure, homodimer.

It localises to the cytoplasm. The enzyme catalyses glycyl-tRNA(Ala) + H2O = tRNA(Ala) + glycine + H(+). It carries out the reaction a D-aminoacyl-tRNA + H2O = a tRNA + a D-alpha-amino acid + H(+). Functionally, an aminoacyl-tRNA editing enzyme that deacylates mischarged D-aminoacyl-tRNAs. Also deacylates mischarged glycyl-tRNA(Ala), protecting cells against glycine mischarging by AlaRS. Acts via tRNA-based rather than protein-based catalysis; rejects L-amino acids rather than detecting D-amino acids in the active site. By recycling D-aminoacyl-tRNA to D-amino acids and free tRNA molecules, this enzyme counteracts the toxicity associated with the formation of D-aminoacyl-tRNA entities in vivo and helps enforce protein L-homochirality. This Caldicellulosiruptor bescii (strain ATCC BAA-1888 / DSM 6725 / KCTC 15123 / Z-1320) (Anaerocellum thermophilum) protein is D-aminoacyl-tRNA deacylase.